Reading from the N-terminus, the 163-residue chain is 3-isopropylmalate dehydratase small subunit 2 (163 aa).

Belongs to the LeuD family. LeuD type 2 subfamily. Heterodimer of LeuC and LeuD.

It carries out the reaction (2R,3S)-3-isopropylmalate = (2S)-2-isopropylmalate. It participates in amino-acid biosynthesis; L-leucine biosynthesis; L-leucine from 3-methyl-2-oxobutanoate: step 2/4. Catalyzes the isomerization between 2-isopropylmalate and 3-isopropylmalate, via the formation of 2-isopropylmaleate. This Pyrococcus abyssi (strain GE5 / Orsay) protein is 3-isopropylmalate dehydratase small subunit 2 (leuD2).